Reading from the N-terminus, the 314-residue chain is tRNA uridine(34) hydroxylase (314 aa).

The 95-residue stretch at 140 to 234 (ARDDVILIDT…YLEETPPDES (95 aa)) folds into the Rhodanese domain. Cysteine 194 serves as the catalytic Cysteine persulfide intermediate.

This sequence belongs to the TrhO family.

The enzyme catalyses uridine(34) in tRNA + AH2 + O2 = 5-hydroxyuridine(34) in tRNA + A + H2O. Functionally, catalyzes oxygen-dependent 5-hydroxyuridine (ho5U) modification at position 34 in tRNAs. This is tRNA uridine(34) hydroxylase from Acinetobacter baumannii (strain AYE).